A 348-amino-acid chain; its full sequence is Cyclic AMP-dependent transcription factor ATF-4 (348 aa).

Lys-53 participates in a covalent cross-link: Glycyl lysine isopeptide (Lys-Gly) (interchain with G-Cter in SUMO2). Disordered stretches follow at residues Gln-151 to His-174 and Pro-187 to Met-265. Phosphoserine occurs at positions 211, 215, 220, 227, and 231. The BetaTrCP degron motif motif lies at Ser-211–Ser-220. Positions Pro-221–Lys-241 are enriched in polar residues. 4-hydroxyproline is present on Pro-232. Residues Ser-242 and Ser-245 each carry the phosphoserine modification. The span at Ser-242–Ser-253 shows a compositional bias: low complexity. Glycyl lysine isopeptide (Lys-Gly) (interchain with G-Cter in SUMO2) cross-links involve residues Lys-256, Lys-264, and Lys-269. Residues Leu-275–Val-338 form the bZIP domain. Residues Lys-277–Arg-297 form a basic motif region. The tract at residues Ala-302 to Val-338 is interaction with GABBR1. Residues Leu-303–Leu-331 form a leucine-zipper region. Lys-308 carries the post-translational modification N6-acetyllysine.

This sequence belongs to the bZIP family. In terms of assembly, binds DNA as a homodimer and as a heterodimer. Heterodimer; heterodimerizes with CEBPB. Heterodimer; heterodimerizes with DDIT3/CHOP. Interacts with CEP290 (via an N-terminal region). Interacts with NEK6, DAPK2 (isoform 2) and ZIPK/DAPK3. Interacts (via its leucine zipper domain) with GABBR1 and GABBR2 (via their C-termini). Forms a heterodimer with TXLNG in osteoblasts. Interacts (via its DNA binding domain) with FOXO1 (C-terminal half); the interaction occurs in osteoblasts and regulates glucose homeostasis through suppression of beta-cell proliferation and a decrease in insulin production. Interacts with SATB2; the interaction results in enhanced DNA binding and transactivation by these transcription factors. Interacts with ABRAXAS2. Interacts with TRIB3, inhibiting the transactivation activity of ATF4. Interacts with DISC1; which inhibits ATF4 transcription factor activity by disrupting ATF4 dimerization and DNA-binding. Interacts with EP300/p300; EP300/p300 stabilizes ATF4 and increases its transcriptional activity independently of its catalytic activity by preventing its ubiquitination. Post-translationally, ubiquitinated by SCF(BTRC) in response to mTORC1 signal, followed by proteasomal degradation and leading to down-regulate expression of SIRT4. Interaction with EP300/p300 inhibits ubiquitination by SCF(BTRC). Phosphorylation at Ser-242 by RPS6KA3/RSK2 in osteoblasts enhances transactivation activity and promotes osteoblast differentiation. Phosphorylated on the betaTrCP degron motif at Ser-215, followed by phosphorylation at Ser-220, Ser-227, Ser-231 and Ser-245, promoting interaction with BTRC and ubiquitination. Phosphorylation is promoted by mTORC1. Phosphorylation at Ser-211 by CK2 decreases its stability. Phosphorylated by NEK6. In terms of processing, hydroxylated by PHD3, leading to decreased protein stability.

The protein localises to the nucleus. The protein resides in the nucleus speckle. It is found in the cytoplasm. Its subcellular location is the cell membrane. It localises to the cytoskeleton. The protein localises to the microtubule organizing center. The protein resides in the centrosome. Transcription factor that binds the cAMP response element (CRE) (consensus: 5'-GTGACGT[AC][AG]-3') and displays two biological functions, as regulator of metabolic and redox processes under normal cellular conditions, and as master transcription factor during integrated stress response (ISR). Binds to asymmetric CRE's as a heterodimer and to palindromic CRE's as a homodimer. Core effector of the ISR, which is required for adaptation to various stress such as endoplasmic reticulum (ER) stress, amino acid starvation, mitochondrial stress or oxidative stress. During ISR, ATF4 translation is induced via an alternative ribosome translation re-initiation mechanism in response to EIF2S1/eIF-2-alpha phosphorylation, and stress-induced ATF4 acts as a master transcription factor of stress-responsive genes in order to promote cell recovery. Promotes the transcription of genes linked to amino acid sufficiency and resistance to oxidative stress to protect cells against metabolic consequences of ER oxidation. Activates the transcription of NLRP1, possibly in concert with other factors in response to ER stress. Activates the transcription of asparagine synthetase (ASNS) in response to amino acid deprivation or ER stress. However, when associated with DDIT3/CHOP, the transcriptional activation of the ASNS gene is inhibited in response to amino acid deprivation. Together with DDIT3/CHOP, mediates programmed cell death by promoting the expression of genes involved in cellular amino acid metabolic processes, mRNA translation and the terminal unfolded protein response (terminal UPR), a cellular response that elicits programmed cell death when ER stress is prolonged and unresolved. Activates the expression of COX7A2L/SCAF1 downstream of the EIF2AK3/PERK-mediated unfolded protein response, thereby promoting formation of respiratory chain supercomplexes and increasing mitochondrial oxidative phosphorylation. Together with DDIT3/CHOP, activates the transcription of the IRS-regulator TRIB3 and promotes ER stress-induced neuronal cell death by regulating the expression of BBC3/PUMA in response to ER stress. May cooperate with the UPR transcriptional regulator QRICH1 to regulate ER protein homeostasis which is critical for cell viability in response to ER stress. In the absence of stress, ATF4 translation is at low levels and it is required for normal metabolic processes such as embryonic lens formation, fetal liver hematopoiesis, bone development and synaptic plasticity. Acts as a regulator of osteoblast differentiation in response to phosphorylation by RPS6KA3/RSK2: phosphorylation in osteoblasts enhances transactivation activity and promotes expression of osteoblast-specific genes and post-transcriptionally regulates the synthesis of Type I collagen, the main constituent of the bone matrix. Cooperates with FOXO1 in osteoblasts to regulate glucose homeostasis through suppression of beta-cell production and decrease in insulin production. Activates transcription of SIRT4. Regulates the circadian expression of the core clock component PER2 and the serotonin transporter SLC6A4. Binds in a circadian time-dependent manner to the cAMP response elements (CRE) in the SLC6A4 and PER2 promoters and periodically activates the transcription of these genes. Mainly acts as a transcriptional activator in cellular stress adaptation, but it can also act as a transcriptional repressor: acts as a regulator of synaptic plasticity by repressing transcription, thereby inhibiting induction and maintenance of long-term memory. Regulates synaptic functions via interaction with DISC1 in neurons, which inhibits ATF4 transcription factor activity by disrupting ATF4 dimerization and DNA-binding. The chain is Cyclic AMP-dependent transcription factor ATF-4 from Bos taurus (Bovine).